Consider the following 624-residue polypeptide: Bifunctional protein ArgH (624 aa).

The argininosuccinate lyase stretch occupies residues 1–466; the sequence is MALWGGRFTQ…AARDTTLVKV (466 aa). The N-acetyltransferase domain maps to 464–614; that stretch reads VKVRPARITD…DEVALEFNLS (151 aa). Residues 467–624 form a probable acetyltransferase region; sequence RPARITDIET…EQIISQVKVA (158 aa).

The protein in the N-terminal section; belongs to the lyase 1 family. Argininosuccinate lyase subfamily.

The protein resides in the cytoplasm. The catalysed reaction is 2-(N(omega)-L-arginino)succinate = fumarate + L-arginine. The protein operates within amino-acid biosynthesis; L-arginine biosynthesis; L-arginine from L-ornithine and carbamoyl phosphate: step 3/3. The chain is Bifunctional protein ArgH (argH) from Vibrio vulnificus (strain CMCP6).